The chain runs to 401 residues: MTLPKIKQVRAWFTGGATAEKGAGGGDYHDQGANHWIDDHIATPMSKYRDYEQSRQSFGINVLGTLVVEVEAENGQTGFAVSTAGEMGCFIVEKHLNRFIEGKCVSDIKLIHDQMLSATLYYSGSGGLVMNTISCVDLALWDLFGKVVGLPVYKLLGGAVRDEIQFYATGARPDLAKEMGFIGGKMPTHWGPHDGDAGIRKDAAMVADMREKCGEDFWLMLDCWMSQDVNYATKLAHACAPYNLKWIEECLPPQQYESYRELKRNAPVGMMVTSGEHHGTLQSFRTLSETGIDIMQPDVGWCGGLTTLVEIAAIAKSRGQLVVPHGSSVYSHHAVITFTNTPFSEFLMTSPDCSTMRPQFDPILLNEPVPVNGRIHKSVLDKPGFGVELNRDCNLKRPYSH.

Substrate is bound by residues His29 and Arg55. Mg(2+) is bound by residues Asp222, Glu248, and Glu276. His325 serves as the catalytic Proton acceptor. Residue Glu345 participates in substrate binding.

This sequence belongs to the mandelate racemase/muconate lactonizing enzyme family. RhamD subfamily. As to quaternary structure, homooctamer; tetramer of dimers. The cofactor is Mg(2+).

The catalysed reaction is L-rhamnonate = 2-dehydro-3-deoxy-L-rhamnonate + H2O. Catalyzes the dehydration of L-rhamnonate to 2-keto-3-deoxy-L-rhamnonate (KDR). Can also dehydrate L-lyxonate, L-mannonate and D-gulonate, although less efficiently, but not 2-keto-4-hydroxyheptane-1,7-dioate. This is L-rhamnonate dehydratase (rhmD) from Escherichia coli (strain K12).